The primary structure comprises 207 residues: N-(5'-phosphoribosyl)anthranilate isomerase (207 aa).

The protein belongs to the TrpF family.

It catalyses the reaction N-(5-phospho-beta-D-ribosyl)anthranilate = 1-(2-carboxyphenylamino)-1-deoxy-D-ribulose 5-phosphate. Its pathway is amino-acid biosynthesis; L-tryptophan biosynthesis; L-tryptophan from chorismate: step 3/5. In Legionella pneumophila subsp. pneumophila (strain Philadelphia 1 / ATCC 33152 / DSM 7513), this protein is N-(5'-phosphoribosyl)anthranilate isomerase.